The chain runs to 376 residues: Palmitoyltransferase PFA4 (376 aa).

Over 1-11 the chain is Cytoplasmic; it reads MPVKLKWPWLG. The helical transmembrane segment at 12–32 threads the bilayer; the sequence is IAIPSFLIASIGYCAHYFILL. The Lumenal portion of the chain corresponds to 33 to 40; that stretch reads NFLSLRKQ. Residues 41-61 form a helical membrane-spanning segment; the sequence is LWYQFCQTMIWLSYYLAIYTP. Over 62–122 the chain is Cytoplasmic; sequence PGKPPTNFKP…NCVGYNNFPH (61 aa). In terms of domain architecture, DHHC spans 78–128; the sequence is VYCKKCKCYKPERSHHCKTCNQCVLMMDHHCPWTMNCVGYNNFPHFIRFLF. The S-palmitoyl cysteine intermediate role is filled by Cys-108. The chain crosses the membrane as a helical span at residues 123–143; sequence FIRFLFWVIVGTTSLAIFLTT. Residues 144–163 are Lumenal-facing; the sequence is RIHSIWVHRSSPSYLYYKSE. Residues 164 to 184 traverse the membrane as a helical segment; the sequence is LIFLTILTPLNAFILLTISIL. The Cytoplasmic portion of the chain corresponds to 185–376; it reads MIRCLFNQIF…EDFGVDVDVE (192 aa).

Belongs to the DHHC palmitoyltransferase family. PFA4 subfamily.

The protein localises to the endoplasmic reticulum membrane. The catalysed reaction is L-cysteinyl-[protein] + hexadecanoyl-CoA = S-hexadecanoyl-L-cysteinyl-[protein] + CoA. Its function is as follows. Mediates the reversible addition of palmitate to target proteins, thereby regulating their membrane association and biological function. The polypeptide is Palmitoyltransferase PFA4 (Candida glabrata (strain ATCC 2001 / BCRC 20586 / JCM 3761 / NBRC 0622 / NRRL Y-65 / CBS 138) (Yeast)).